The following is a 272-amino-acid chain: Imidazole glycerol phosphate synthase subunit HisF (272 aa).

Catalysis depends on residues Asp-11 and Asp-130.

The protein belongs to the HisA/HisF family. As to quaternary structure, heterodimer of HisH and HisF.

The protein localises to the cytoplasm. The catalysed reaction is 5-[(5-phospho-1-deoxy-D-ribulos-1-ylimino)methylamino]-1-(5-phospho-beta-D-ribosyl)imidazole-4-carboxamide + L-glutamine = D-erythro-1-(imidazol-4-yl)glycerol 3-phosphate + 5-amino-1-(5-phospho-beta-D-ribosyl)imidazole-4-carboxamide + L-glutamate + H(+). It functions in the pathway amino-acid biosynthesis; L-histidine biosynthesis; L-histidine from 5-phospho-alpha-D-ribose 1-diphosphate: step 5/9. Its function is as follows. IGPS catalyzes the conversion of PRFAR and glutamine to IGP, AICAR and glutamate. The HisF subunit catalyzes the cyclization activity that produces IGP and AICAR from PRFAR using the ammonia provided by the HisH subunit. In Methanococcus maripaludis (strain C7 / ATCC BAA-1331), this protein is Imidazole glycerol phosphate synthase subunit HisF.